A 99-amino-acid chain; its full sequence is Class II hydrophobin 1 (99 aa).

A signal peptide spans methionine 1–threonine 26. Intrachain disulfides connect cysteine 31–cysteine 80, cysteine 41–cysteine 71, cysteine 42–cysteine 54, and cysteine 81–cysteine 92.

Belongs to the cerato-ulmin hydrophobin family. As to quaternary structure, homotetramer. Further self-assembles to form highly ordered films at water-air interfaces through intermolecular interactions.

The protein localises to the secreted. It localises to the cell wall. Its function is as follows. Aerial growth, conidiation, and dispersal of filamentous fungi in the environment rely upon a capability of their secreting small amphipathic proteins called hydrophobins (HPBs) with low sequence identity. Class I can self-assemble into an outermost layer of rodlet bundles on aerial cell surfaces, conferring cellular hydrophobicity that supports fungal growth, development and dispersal; whereas Class II form highly ordered films at water-air interfaces through intermolecular interactions but contribute nothing to the rodlet structure. HFB1 is a class II hydrophobin that shows antifungal activity against pathogenic and opportunistic fungi such as Cryptococcus neoformans, Nakaseomyces glabrataa, or Candida tropicalis. The chain is Class II hydrophobin 1 from Sodiomyces alkalinus (strain CBS 110278 / VKM F-3762 / F11) (Alkaliphilic filamentous fungus).